Here is a 479-residue protein sequence, read N- to C-terminus: Aspartyl/glutamyl-tRNA(Asn/Gln) amidotransferase subunit B (479 aa).

It belongs to the GatB/GatE family. GatB subfamily. In terms of assembly, heterotrimer of A, B and C subunits.

It catalyses the reaction L-glutamyl-tRNA(Gln) + L-glutamine + ATP + H2O = L-glutaminyl-tRNA(Gln) + L-glutamate + ADP + phosphate + H(+). It carries out the reaction L-aspartyl-tRNA(Asn) + L-glutamine + ATP + H2O = L-asparaginyl-tRNA(Asn) + L-glutamate + ADP + phosphate + 2 H(+). Functionally, allows the formation of correctly charged Asn-tRNA(Asn) or Gln-tRNA(Gln) through the transamidation of misacylated Asp-tRNA(Asn) or Glu-tRNA(Gln) in organisms which lack either or both of asparaginyl-tRNA or glutaminyl-tRNA synthetases. The reaction takes place in the presence of glutamine and ATP through an activated phospho-Asp-tRNA(Asn) or phospho-Glu-tRNA(Gln). The chain is Aspartyl/glutamyl-tRNA(Asn/Gln) amidotransferase subunit B from Geobacter sp. (strain M21).